An 833-amino-acid polypeptide reads, in one-letter code: Leucine--tRNA ligase (833 aa).

The short motif at 41–52 (PYPSGAGLHVGH) is the 'HIGH' region element. The 'KMSKS' region motif lies at 610–614 (KMSKS). Residue Lys-613 coordinates ATP.

The protein belongs to the class-I aminoacyl-tRNA synthetase family.

The protein resides in the cytoplasm. It carries out the reaction tRNA(Leu) + L-leucine + ATP = L-leucyl-tRNA(Leu) + AMP + diphosphate. The sequence is that of Leucine--tRNA ligase from Streptococcus pneumoniae (strain CGSP14).